Here is a 566-residue protein sequence, read N- to C-terminus: Developmental regulatory protein wetA (566 aa).

Disordered stretches follow at residues 116 to 174 (VPAV…LMRP), 232 to 316 (STEG…SDSL), 334 to 364 (AWWP…SIQS), 381 to 400 (SSFD…VTSA), and 429 to 542 (PPVQ…RRRK). Polar residues-rich tracts occupy residues 165-174 (QSFSPSLMRP) and 269-291 (AQQQ…SSPP). A compositionally biased stretch (low complexity) spans 298-316 (SSPHSSDPQSLSSWHSDSL). 2 stretches are compositionally biased toward polar residues: residues 347 to 364 (PSYQ…SIQS) and 381 to 398 (SSFD…SVVT). Positions 435–448 (SRSPSLSPRGRGSP) are enriched in low complexity. Polar residues predominate over residues 449–462 (TQGSPLRNEASTKT). Basic residues predominate over residues 463 to 473 (SPHRRGYHGRK). Over residues 482 to 500 (PKPVKGPNSSSPGSGSNKS) the composition is skewed to low complexity. Residues 501–511 (LTVSFVNFTPN) show a composition bias toward polar residues.

It belongs to the wetA family.

Functionally, brlA, abaA and wetA are pivotal regulators of conidiophore development and conidium maturation. They act individually and together to regulate their own expression and that of numerous other sporulation-specific genes. Plays an essential role in the completion of conidial maturation and is essential for trehalose biogenesis in conidia. Negatively regulates expression of the melanin biosynthetic gene cluster. Also plays an a role in the early phase of fungal growth including proper hyphal branching. This Aspergillus fumigatus (strain ATCC MYA-4609 / CBS 101355 / FGSC A1100 / Af293) (Neosartorya fumigata) protein is Developmental regulatory protein wetA.